A 444-amino-acid chain; its full sequence is Maintenance of mitochondrial morphology protein 1 (444 aa).

Polar residues predominate over residues 1–16; the sequence is MKGVENTLSQSESVNR. Residues 1–20 are disordered; that stretch reads MKGVENTLSQSESVNRGYNG. The Lumenal portion of the chain corresponds to 1 to 107; it reads MKGVENTLSQ…TFSSRSFAEG (107 aa). The chain crosses the membrane as a helical span at residues 108 to 128; sequence LVVGQLSVIVVLIFFIKFFIF. Residues 129–444 are Cytoplasmic-facing; that stretch reads SDGPAKTGGG…QEEDPSRAPE (316 aa). Positions 136–157 are disordered; sequence GGGGGSSAESRSSGFTGSPLTS. Over residues 142 to 157 the composition is skewed to low complexity; that stretch reads SAESRSSGFTGSPLTS. Positions 204–418 constitute an SMP-LTD domain; that stretch reads SPESLDWFNV…EPRFQFVKLP (215 aa). A disordered region spans residues 425 to 444; that stretch reads KNTREEKSDMQEEDPSRAPE. A compositionally biased stretch (basic and acidic residues) spans 426–444; it reads NTREEKSDMQEEDPSRAPE.

This sequence belongs to the MMM1 family. In terms of assembly, homodimer. Component of the ER-mitochondria encounter structure (ERMES) or MDM complex, composed of MMM1, MDM10, MDM12 and MDM34. An MMM1 homodimer associates with one molecule of MDM12 on each side in a pairwise head-to-tail manner, and the SMP-LTD domains of MMM1 and MDM12 generate a continuous hydrophobic tunnel for phospholipid trafficking.

Its subcellular location is the endoplasmic reticulum membrane. Its function is as follows. Component of the ERMES/MDM complex, which serves as a molecular tether to connect the endoplasmic reticulum (ER) and mitochondria. Components of this complex are involved in the control of mitochondrial shape and protein biogenesis, and function in nonvesicular lipid trafficking between the ER and mitochondria. The MDM12-MMM1 subcomplex functions in the major beta-barrel assembly pathway that is responsible for biogenesis of all outer membrane beta-barrel proteins, and acts in a late step after the SAM complex. The MDM10-MDM12-MMM1 subcomplex further acts in the TOM40-specific pathway after the action of the MDM12-MMM1 complex. Essential for establishing and maintaining the structure of mitochondria and maintenance of mtDNA nucleoids. This chain is Maintenance of mitochondrial morphology protein 1, found in Eremothecium gossypii (strain ATCC 10895 / CBS 109.51 / FGSC 9923 / NRRL Y-1056) (Yeast).